The primary structure comprises 570 residues: Berberine bridge enzyme-like 19 (570 aa).

The first 30 residues, 1–30 (MLTTPPRTFVSVPFFFFFLLFLSLPLSSFS), serve as a signal peptide directing secretion. Cysteines 42 and 105 form a disulfide. Asn-80 carries an N-linked (GlcNAc...) asparagine glycan. One can recognise an FAD-binding PCMH-type domain in the interval 83–257 (STLKPTIIIT…LGYKVKLVPV (175 aa)). The 6-(S-cysteinyl)-8alpha-(pros-histidyl)-FAD (His-Cys) cross-link spans 120 to 182 (HDYDGLSYIS…RVHGFPAGVC (63 aa)). Residues Asn-341 and Asn-359 are each glycosylated (N-linked (GlcNAc...) asparagine).

It belongs to the oxygen-dependent FAD-linked oxidoreductase family. Requires FAD as cofactor. The FAD cofactor is bound via a bicovalent 6-S-cysteinyl, 8alpha-N1-histidyl FAD linkage.

It localises to the secreted. It is found in the cell wall. This is Berberine bridge enzyme-like 19 from Arabidopsis thaliana (Mouse-ear cress).